Reading from the N-terminus, the 281-residue chain is Proteasome subunit beta (281 aa).

The propeptide at 1 to 53 is removed in mature form; by autocatalysis; sequence MEANTRSTGRLPAAFLTPGSSSFMDFLSDQSPEMLPGNRSLPPLQGAVEAPHG. Thr-54 functions as the Nucleophile in the catalytic mechanism.

Belongs to the peptidase T1B family. As to quaternary structure, the 20S proteasome core is composed of 14 alpha and 14 beta subunits that assemble into four stacked heptameric rings, resulting in a barrel-shaped structure. The two inner rings, each composed of seven catalytic beta subunits, are sandwiched by two outer rings, each composed of seven alpha subunits. The catalytic chamber with the active sites is on the inside of the barrel. Has a gated structure, the ends of the cylinder being occluded by the N-termini of the alpha-subunits. Is capped by the proteasome-associated ATPase, ARC.

Its subcellular location is the cytoplasm. It carries out the reaction Cleavage of peptide bonds with very broad specificity.. It functions in the pathway protein degradation; proteasomal Pup-dependent pathway. The formation of the proteasomal ATPase ARC-20S proteasome complex, likely via the docking of the C-termini of ARC into the intersubunit pockets in the alpha-rings, may trigger opening of the gate for substrate entry. Interconversion between the open-gate and close-gate conformations leads to a dynamic regulation of the 20S proteasome proteolysis activity. Its function is as follows. Component of the proteasome core, a large protease complex with broad specificity involved in protein degradation. In Streptomyces griseus subsp. griseus (strain JCM 4626 / CBS 651.72 / NBRC 13350 / KCC S-0626 / ISP 5235), this protein is Proteasome subunit beta.